We begin with the raw amino-acid sequence, 145 residues long: Flagellar assembly factor FliW (145 aa).

This sequence belongs to the FliW family. Interacts with translational regulator CsrA and flagellin(s).

The protein resides in the cytoplasm. Functionally, acts as an anti-CsrA protein, binds CsrA and prevents it from repressing translation of its target genes, one of which is flagellin. Binds to flagellin and participates in the assembly of the flagellum. This Clostridium tetani (strain Massachusetts / E88) protein is Flagellar assembly factor FliW.